Here is a 212-residue protein sequence, read N- to C-terminus: Thymidylate kinase (212 aa).

7–14 (GIEGCGKS) lines the ATP pocket.

It belongs to the thymidylate kinase family.

The enzyme catalyses dTMP + ATP = dTDP + ADP. Its function is as follows. Phosphorylation of dTMP to form dTDP in both de novo and salvage pathways of dTTP synthesis. The chain is Thymidylate kinase from Trichlorobacter lovleyi (strain ATCC BAA-1151 / DSM 17278 / SZ) (Geobacter lovleyi).